A 246-amino-acid chain; its full sequence is MPVNENVILLDIEGTITSISFVKDTLFPYVTKVLEDYIEKYWDDESFQQDLELLRAQAVIDSNVEGFVPISTGDNAKTSVINNVLWQMTNDKKTTALKQLQGHIWKDGYESGLLRGHLYEDVLPVLNKLTDFGKKIYTYSSGSTKAQEYLFQYSMYGDVSGIFLKYFDTKMGPKGSETSYINIANEINVNCSDILFLTDVVVEAEAAVKAGCNSIFLVRPGNAPLDPEKSSKFRIIKTLDELLETE.

The Mg(2+) site is built by Asp-11 and Glu-13. Substrate contacts are provided by residues 140 to 141 (SS) and Lys-174. Asp-199 is a binding site for Mg(2+).

This sequence belongs to the HAD-like hydrolase superfamily. MasA/MtnC family. In terms of assembly, monomer. Requires Mg(2+) as cofactor.

The protein localises to the cytoplasm. It is found in the nucleus. The catalysed reaction is 5-methylsulfanyl-2,3-dioxopentyl phosphate + H2O = 1,2-dihydroxy-5-(methylsulfanyl)pent-1-en-3-one + phosphate. It functions in the pathway amino-acid biosynthesis; L-methionine biosynthesis via salvage pathway; L-methionine from S-methyl-5-thio-alpha-D-ribose 1-phosphate: step 3/6. It participates in amino-acid biosynthesis; L-methionine biosynthesis via salvage pathway; L-methionine from S-methyl-5-thio-alpha-D-ribose 1-phosphate: step 4/6. In terms of biological role, bifunctional enzyme that catalyzes the enolization of 2,3-diketo-5-methylthiopentyl-1-phosphate (DK-MTP-1-P) into the intermediate 2-hydroxy-3-keto-5-methylthiopentenyl-1-phosphate (HK-MTPenyl-1-P), which is then dephosphorylated to form the acireductone 1,2-dihydroxy-3-keto-5-methylthiopentene (DHK-MTPene). The protein is Enolase-phosphatase E1 of Acyrthosiphon pisum (Pea aphid).